The primary structure comprises 122 residues: Large ribosomal subunit protein uL14 (122 aa).

It belongs to the universal ribosomal protein uL14 family. Part of the 50S ribosomal subunit. Forms a cluster with proteins L3 and L19. In the 70S ribosome, L14 and L19 interact and together make contacts with the 16S rRNA in bridges B5 and B8.

Its function is as follows. Binds to 23S rRNA. Forms part of two intersubunit bridges in the 70S ribosome. This is Large ribosomal subunit protein uL14 from Bacillus pumilus (strain SAFR-032).